The chain runs to 83 residues: Exodeoxyribonuclease 7 small subunit (83 aa).

This sequence belongs to the XseB family. As to quaternary structure, heterooligomer composed of large and small subunits.

The protein localises to the cytoplasm. It catalyses the reaction Exonucleolytic cleavage in either 5'- to 3'- or 3'- to 5'-direction to yield nucleoside 5'-phosphates.. Functionally, bidirectionally degrades single-stranded DNA into large acid-insoluble oligonucleotides, which are then degraded further into small acid-soluble oligonucleotides. The sequence is that of Exodeoxyribonuclease 7 small subunit from Nitrobacter winogradskyi (strain ATCC 25391 / DSM 10237 / CIP 104748 / NCIMB 11846 / Nb-255).